The sequence spans 405 residues: MFNYEELFQTYKTPFYLYDFDKIKQAFLNYKEAFKGRKSLICYALKANSNLSILSLLANLGSGADCVSIGEIQRALKAGIKPYKIVFSGVGKSAFEIEQALKLNILFLNVESFMELKTIETIAQSLGIKARISIRINPNIDAKTHPYISTGLKENKFGVEEKEALEMFLWAKKSAFLEPVSVHFHIGSQLLDLDPITEASQKVAKIAKSLIALGIDLRFFDVGGGIGVSYENEETIKLYDYAQGILNSLQGLDLTIICEPGRSIVAESGELITQVLYEKKAQNKRFVIVDAGMNDFLRPSLYHAKHAIRVITPCGGREISPCDVVGPVCESSDTFLKDANLPELEPGDKLAIEKVGAYGSSMASQYNSRPKLLELALEDHKIRVIRKREALEDLWRLEIEGLEGV.

K46 carries the N6-(pyridoxal phosphate)lysine modification. Pyridoxal 5'-phosphate-binding positions include G225 and 259–262; that span reads EPGR. 3 residues coordinate substrate: R262, R298, and Y302. The active-site Proton donor is the C329. Residues E330 and Y358 each coordinate substrate. Position 358 (Y358) interacts with pyridoxal 5'-phosphate.

It belongs to the Orn/Lys/Arg decarboxylase class-II family. LysA subfamily. As to quaternary structure, homodimer. It depends on pyridoxal 5'-phosphate as a cofactor.

It carries out the reaction meso-2,6-diaminopimelate + H(+) = L-lysine + CO2. The protein operates within amino-acid biosynthesis; L-lysine biosynthesis via DAP pathway; L-lysine from DL-2,6-diaminopimelate: step 1/1. Functionally, specifically catalyzes the decarboxylation of meso-diaminopimelate (meso-DAP) to L-lysine. The protein is Diaminopimelate decarboxylase of Helicobacter pylori (strain J99 / ATCC 700824) (Campylobacter pylori J99).